The primary structure comprises 183 residues: Integrase-like protein y4lS (183 aa).

Residues 2 to 136 (ARIGYARTFT…EGIAAARKRG (135 aa)) form the Resolvase/invertase-type recombinase catalytic domain.

It belongs to the site-specific recombinase resolvase family.

The sequence is that of Integrase-like protein y4lS from Sinorhizobium fredii (strain NBRC 101917 / NGR234).